The primary structure comprises 431 residues: Enolase (431 aa).

Q167 contributes to the (2R)-2-phosphoglycerate binding site. E209 functions as the Proton donor in the catalytic mechanism. Positions 246, 289, and 316 each coordinate Mg(2+). (2R)-2-phosphoglycerate-binding residues include K341, R370, S371, and K392. The active-site Proton acceptor is K341.

The protein belongs to the enolase family. In terms of assembly, component of the RNA degradosome, a multiprotein complex involved in RNA processing and mRNA degradation. It depends on Mg(2+) as a cofactor.

The protein localises to the cytoplasm. It is found in the secreted. The protein resides in the cell surface. It catalyses the reaction (2R)-2-phosphoglycerate = phosphoenolpyruvate + H2O. It functions in the pathway carbohydrate degradation; glycolysis; pyruvate from D-glyceraldehyde 3-phosphate: step 4/5. Functionally, catalyzes the reversible conversion of 2-phosphoglycerate (2-PG) into phosphoenolpyruvate (PEP). It is essential for the degradation of carbohydrates via glycolysis. The sequence is that of Enolase from Shewanella baltica (strain OS155 / ATCC BAA-1091).